The sequence spans 236 residues: MRKKHFNMILKLALISSLLALAASRTHLTDCLDDHKYCVGLPRGCVGTECNFAFSSISNGTHTEIEIFGNSVIDKTWLAIGYSADKKMEDDFVVFCIRDDAGTNMNKLDQMAGLAYNGKHSNEMTGTIENIKKNKNDKFGLDLEMKEYEKDEQTLYCKMAHRVEPIIDRFNVSKVEILMAKGTWMKGGLSYHGNTRNNTGIIDLSGESKHKRKNSAVGSLALVSSAITFLAAKMLF.

An N-terminal signal peptide occupies residues 1 to 24 (MRKKHFNMILKLALISSLLALAAS). N-linked (GlcNAc...) asparagine glycans are attached at residues Asn59, Asn171, and Asn197.

It localises to the secreted. This is an uncharacterized protein from Caenorhabditis elegans.